The primary structure comprises 66 residues: COP-associated protein (66 aa).

The HMA domain occupies 1–66 (MKIDIPVKGM…AILDAGYELG (66 aa)). Positions 12 and 15 each coordinate Cu cation.

Part of a cation-transporting system which is associated with copper export out of the H.pylori cells. This is COP-associated protein (copP) from Helicobacter felis (strain ATCC 49179 / CCUG 28539 / NCTC 12436 / CS1).